Here is a 479-residue protein sequence, read N- to C-terminus: Odorant receptor coreceptor (479 aa).

At 1–43 (MHVQPTKYHGLVLDLMPNIRLMQGFGHFLFRYVSGPVLIRKLY) the chain is on the cytoplasmic side. Residues 44–64 (SWWNLIMILLQYFAIMGNLVM) traverse the membrane as a helical segment. Over 65 to 73 (NTGDVNELT) the chain is Extracellular. Residues 74–94 (ANTITTLFFTHSVTKFIYVAV) traverse the membrane as a helical segment. Residues 95-133 (NSEHFYRTLGIWNQPNSHSLFAESDARYHSIALAKMRKL) lie on the Cytoplasmic side of the membrane. The chain crosses the membrane as a helical span at residues 134 to 154 (LVMVMVTTVLSVVAWITITFF). Residues 155-187 (GDSVKNVFDKETNETYTVEIPRLPIKALYPWDA) are Extracellular-facing. Asparagine 167 carries N-linked (GlcNAc...) asparagine glycosylation. A helical transmembrane segment spans residues 188-208 (MSGVPYFFSFVYQAYFLLFSM). Over 209–344 (CQANLADVMF…VERHKHVVRL (136 aa)) the chain is Cytoplasmic. The helical transmembrane segment at 345–365 (VSAIGETYGAALLLHMLTSTI) threads the bilayer. Residues 366 to 383 (KLTLLAYQATKIDALNVY) are Extracellular-facing. Residues 384-404 (GLTVIGYLVYALAQVFLFCIF) form a helical membrane-spanning segment. At 405-455 (GNRLIEESSSVMEAAYSCHWYDGSEEAKTFVQIVCQQCQKAMTISGAKFFT) the chain is on the cytoplasmic side. The chain crosses the membrane as a helical span at residues 456–476 (VSLDLFASVLGAVVTYFMVLV). Residues 477-479 (QLK) are Extracellular-facing.

The protein belongs to the insect chemoreceptor superfamily. Heteromeric odorant receptor channel (TC 1.A.69) family. Orco subfamily. In terms of assembly, heterodimer with conventional odorant receptors (ORs). In terms of tissue distribution, expressed in female antenna, maxillary palp and proboscis. Not detected in male tissues.

Its subcellular location is the cell membrane. Its function is as follows. Odorant coreceptor which complexes with conventional odorant receptors (ORs) to form odorant-sensing units, providing sensitive and prolonged odorant signaling and calcium permeability. Orco is a universal and integral part of the functional odorant receptor, involved in the dendritic localization of other olfactory receptors. Required for detecting a host for blood feeding. Plays a key role in preferred attraction of females for humans over non-human hosts for blood feeding. This chain is Odorant receptor coreceptor, found in Aedes albopictus (Asian tiger mosquito).